A 116-amino-acid chain; its full sequence is Secreted RxLR effector protein 9 (116 aa).

The signal sequence occupies residues 1 to 17 (MRLIYIFMVSIVTTLHA). The RxLR-dEER motif lies at 49-64 (RILRGTDGNVNREQER).

This sequence belongs to the RxLR effector family.

The protein localises to the secreted. It localises to the host cytoplasm. Its subcellular location is the host nucleus. Effector that acts as a broad suppressor of cell death to interrupt plant immunity. Inhibits cell death induced by cell death-inducing proteins, including the PAMP elicitor INF1 from P.infestans. The protein is Secreted RxLR effector protein 9 of Plasmopara viticola (Downy mildew of grapevine).